Consider the following 492-residue polypeptide: Fascin-2 (492 aa).

Belongs to the fascin family. As to expression, localized specifically in the outer and inner segments of the photoreceptor cells in the retina.

Its subcellular location is the cytoplasm. It is found in the cytoskeleton. The protein resides in the cell projection. It localises to the stereocilium. Functionally, acts as an actin bundling protein. May play a pivotal role in photoreceptor cell-specific events, such as disk morphogenesis. The polypeptide is Fascin-2 (FSCN2) (Homo sapiens (Human)).